The following is a 525-amino-acid chain: Ent-kaurene oxidase (525 aa).

A helical transmembrane segment spans residues 31–51; it reads VHWLIYVAFGAWLCSYVIHVL. Residue cysteine 466 participates in heme binding.

Belongs to the cytochrome P450 family. The cofactor is heme.

It is found in the membrane. The catalysed reaction is ent-kaur-16-ene + 3 reduced [NADPH--hemoprotein reductase] + 3 O2 = ent-kaur-16-en-19-oate + 3 oxidized [NADPH--hemoprotein reductase] + 4 H2O + 4 H(+). It functions in the pathway plant hormone biosynthesis; gibberellin biosynthesis. Its function is as follows. Catalyzes three successive oxidations of the 4-methyl group of ent-kaurene giving kaurenoic acid, a key step in gibberellin (GA) biosynthesis. In Gibberella intermedia (Bulb rot disease fungus), this protein is Ent-kaurene oxidase (CYP503A1).